The following is a 235-amino-acid chain: Aspartate/glutamate leucyltransferase (235 aa).

This sequence belongs to the R-transferase family. Bpt subfamily.

It localises to the cytoplasm. It carries out the reaction N-terminal L-glutamyl-[protein] + L-leucyl-tRNA(Leu) = N-terminal L-leucyl-L-glutamyl-[protein] + tRNA(Leu) + H(+). The enzyme catalyses N-terminal L-aspartyl-[protein] + L-leucyl-tRNA(Leu) = N-terminal L-leucyl-L-aspartyl-[protein] + tRNA(Leu) + H(+). Its function is as follows. Functions in the N-end rule pathway of protein degradation where it conjugates Leu from its aminoacyl-tRNA to the N-termini of proteins containing an N-terminal aspartate or glutamate. This chain is Aspartate/glutamate leucyltransferase, found in Pseudomonas aeruginosa (strain LESB58).